Reading from the N-terminus, the 115-residue chain is NADH-ubiquinone oxidoreductase chain 3 (115 aa).

3 helical membrane-spanning segments follow: residues 3-23, 55-75, and 84-104; these read FALILMINTLLALLLMIITFW, FFLVAITFLLFDLEIALLLPL, and LPLMVMSSLLLIIILALSLAY.

This sequence belongs to the complex I subunit 3 family. In terms of assembly, core subunit of respiratory chain NADH dehydrogenase (Complex I) which is composed of 45 different subunits. Interacts with TMEM186. Interacts with TMEM242.

The protein resides in the mitochondrion inner membrane. The catalysed reaction is a ubiquinone + NADH + 5 H(+)(in) = a ubiquinol + NAD(+) + 4 H(+)(out). Its function is as follows. Core subunit of the mitochondrial membrane respiratory chain NADH dehydrogenase (Complex I) which catalyzes electron transfer from NADH through the respiratory chain, using ubiquinone as an electron acceptor. Essential for the catalytic activity of complex I. The protein is NADH-ubiquinone oxidoreductase chain 3 of Homo sapiens (Human).